A 663-amino-acid chain; its full sequence is MAU2 chromatid cohesion factor homolog (663 aa).

TPR repeat units lie at residues 455-488 and 495-528; these read GGFYYVQGLHAFHKNSFHEAKRFLRETLKMANAE and SCSLVLLSHVFLSIGNSKESMNMVTPAMQLASKI.

The protein belongs to the SCC4/mau-2 family. As to quaternary structure, interacts with Nipped-B to form the cohesin loading complex.

The protein localises to the nucleus. Its subcellular location is the nucleoplasm. Functionally, required for association of the cohesin complex with chromatin during interphase. Plays a role in sister chromatid cohesion and normal progression through prometaphase. This chain is MAU2 chromatid cohesion factor homolog, found in Drosophila willistoni (Fruit fly).